The primary structure comprises 211 residues: tRNA (guanosine(18)-2'-O)-methyltransferase (211 aa).

3 residues coordinate S-adenosyl-L-methionine: threonine 103, isoleucine 146, and leucine 155.

This sequence belongs to the class IV-like SAM-binding methyltransferase superfamily. RNA methyltransferase TrmH family. As to quaternary structure, homodimer.

The enzyme catalyses guanosine(18) in tRNA + S-adenosyl-L-methionine = 2'-O-methylguanosine(18) in tRNA + S-adenosyl-L-homocysteine + H(+). Functionally, catalyzes the 2'-O methylation of guanosine at position 18 in tRNA. Type II methylase, which methylates only a subset of tRNA species. This is tRNA (guanosine(18)-2'-O)-methyltransferase from Aquifex aeolicus (strain VF5).